We begin with the raw amino-acid sequence, 161 residues long: MSYDLETAEHAAYAPFFGYMGAASAQIFTVLGAAYGTAKSAVGICSMGVMRPELIMKSVIPVIMAGIIGIYGLVVAMVLKGKVQAASAGYDLNKGFAHLAAGLTCGLCGLGAGYAIGIVGDAGVRGTAQQPRLFVGMILILIFSEVLGLYGMIVALILGTS.

At 1 to 15 the chain is on the lumenal side; that stretch reads MSYDLETAEHAAYAP. Residues 16–36 traverse the membrane as a helical segment; sequence FFGYMGAASAQIFTVLGAAYG. Topologically, residues 37-58 are cytoplasmic; that stretch reads TAKSAVGICSMGVMRPELIMKS. Residues 59 to 79 traverse the membrane as a helical segment; the sequence is VIPVIMAGIIGIYGLVVAMVL. At 80–98 the chain is on the lumenal side; sequence KGKVQAASAGYDLNKGFAH. The chain crosses the membrane as a helical span at residues 99 to 119; the sequence is LAAGLTCGLCGLGAGYAIGIV. Residues 120 to 137 lie on the Cytoplasmic side of the membrane; sequence GDAGVRGTAQQPRLFVGM. A helical transmembrane segment spans residues 138-158; that stretch reads ILILIFSEVLGLYGMIVALIL. The Lumenal portion of the chain corresponds to 159 to 161; that stretch reads GTS.

Belongs to the V-ATPase proteolipid subunit family. In terms of assembly, V-ATPase is a heteromultimeric enzyme made up of two complexes: the ATP-hydrolytic V1 complex and the proton translocation V0 complex. The V1 complex consists of three catalytic AB heterodimers that form a heterohexamer, three peripheral stalks each consisting of EG heterodimers, one central rotor including subunits D and F, and the regulatory subunits C and H. The proton translocation complex V0 consists of the proton transport subunit a, a ring of proteolipid subunits c9c'', rotary subunit d, subunits e and f, and the accessory subunits vah-19/Ac45 and vah-20/PRR.

Its subcellular location is the membrane. Proton-conducting pore forming subunit of the V0 complex of vacuolar(H+)-ATPase (V-ATPase), a multisubunit enzyme composed of a peripheral complex (V1) that hydrolyzes ATP and a membrane integral complex (V0) that translocates protons. V-ATPase is responsible for acidifying and maintaining the pH of intracellular compartments and in some cell types, is targeted to the plasma membrane, where it is responsible for acidifying the extracellular environment. Involved in necrotic cell death. Required along with other vacuolar ATPase components for the removal of protein aggregates which form in immature oocytes in the distal gonad. This removal occurs as the oocytes mature and move to the proximal gonad, is triggered by the introduction of sperm through mating and occurs before fertilization. The introduction of sperm triggers V-ATPase accumulation in proximal oocytes and induces lysosomal acidification which leads to engulfing of protein aggregates by lysosomes and subsequent clearance of the aggregates. Lysosomal acidification also leads to changes in mitochondrial morphology and function. Mitochondria in distal immature oocytes are fragmented, produce high levels of reactive oxygen species (ROS) and have high membrane potential, indicative of metabolic inactivity. In contrast, mitochondria in proximal mature oocytes are tubular with lower ROS levels and membrane potential, indicative of an active metabolic state required for aggregate mobilization before clearance. The protein is V-type proton ATPase 16 kDa proteolipid subunit c 2 of Caenorhabditis briggsae.